Here is a 187-residue protein sequence, read N- to C-terminus: Frequenin-1 (187 aa).

A lipid anchor (N-myristoyl glycine) is attached at Gly-2. 4 EF-hand domains span residues 24–59 (EKEI…FPQG), 60–95 (DPSK…TSKG), 96–131 (NLDE…IYQM), and 143–178 (TPQK…DPRI). Ca(2+)-binding residues include Asp-73, Asn-75, Asp-77, Ser-79, Glu-84, Asp-109, Asp-111, Asp-113, Tyr-115, Glu-120, Asp-156, Asn-158, Asp-160, Lys-162, and Glu-167.

The protein belongs to the recoverin family. In terms of assembly, in contrast to Frq2, does not interact with ric8a. As to expression, enriched in synapses, such as the motor nerve endings at neuromuscular junctions. In the embryo, highly expressed in the ventral ganglia.

The protein localises to the cytoplasm. Functionally, ca(2+)-dependent modulation of synaptic efficacy. Also plays a role in axon terminal morphology. The polypeptide is Frequenin-1 (Frq1) (Drosophila melanogaster (Fruit fly)).